The primary structure comprises 436 residues: GTPase Der (436 aa).

EngA-type G domains lie at 4–167 (PVVA…PKRG) and 176–351 (IKFC…ENHA). GTP is bound by residues 10–17 (GRPNVGKS), 57–61 (DTGGI), 119–122 (NKID), 182–189 (GRPNVGKS), 229–233 (DTAGM), and 294–297 (NKWD). Positions 352–436 (MRVQTNVLNE…PIKIIARPRK (85 aa)) constitute a KH-like domain.

Belongs to the TRAFAC class TrmE-Era-EngA-EngB-Septin-like GTPase superfamily. EngA (Der) GTPase family. In terms of assembly, associates with the 50S ribosomal subunit.

In terms of biological role, GTPase that plays an essential role in the late steps of ribosome biogenesis. This Geobacillus sp. (strain WCH70) protein is GTPase Der.